Consider the following 177-residue polypeptide: METSLRYGGDSKALKIHAKEKLRIDTNTFFQVRGGLDTKTGQPSSGSALIRHFYPNFSATLGVGVRYDKQDSVGVRYAKNDKLRYTVLAKKTFPVTNDGLVNFKIKGGCDVDQDFKEWKSRGGAEFSWNVFNFQKDQDVRLRIGYEAFEQVPYLQIRENNWTFNADYKGRWNVRYDL.

Residues 1–21 (METSLRYGGDSKALKIHAKEK) are Cytoplasmic-facing. The beta stranded transmembrane segment at 22-31 (LRIDTNTFFQ) threads the bilayer. At 32-55 (VRGGLDTKTGQPSSGSALIRHFYP) the chain is on the chloroplast intermembrane side. Residues 56–65 (NFSATLGVGV) form a beta stranded membrane-spanning segment. The Cytoplasmic segment spans residues 66–81 (RYDKQDSVGVRYAKND). The chain crosses the membrane as a beta stranded span at residues 82 to 91 (KLRYTVLAKK). Over 92-97 (TFPVTN) the chain is Chloroplast intermembrane. Residues 98–107 (DGLVNFKIKG) form a beta stranded membrane-spanning segment. Over 108-120 (GCDVDQDFKEWKS) the chain is Cytoplasmic. A beta stranded membrane pass occupies residues 121-130 (RGGAEFSWNV). Residues 131–137 (FNFQKDQ) lie on the Chloroplast intermembrane side of the membrane. A beta stranded membrane pass occupies residues 138-147 (DVRLRIGYEA). At 148–152 (FEQVP) the chain is on the cytoplasmic side. Residues 153–162 (YLQIRENNWT) traverse the membrane as a beta stranded segment. Residues 163–168 (FNADYK) lie on the Chloroplast intermembrane side of the membrane. A beta stranded transmembrane segment spans residues 169–177 (GRWNVRYDL).

This sequence belongs to the plastid outer envelope porin OEP21 (TC 1.B.29) family. As to expression, present in roots, shoots and leaves.

It is found in the plastid. Its subcellular location is the etioplast membrane. It localises to the chloroplast outer membrane. Its function is as follows. Voltage-dependent rectifying anion channel that facilitates the translocation between chloroplast and cytoplasm of phosphorylated carbohydrates such as triosephosphate, 3-phosphoglycerate and inorganic phosphate (Pi) depending of ATP to triosephosphate ratio in the plastidial intermembrane space; in high triosephosphate/ATP conditions (e.g. photosynthesis), export of triosphosphate from chloroplast (outward rectifying channels), but in high ATP/triosephosphate conditions (e.g. dark phase), import of phosphosolutes (inward rectifying channels). The protein is Outer envelope pore protein 21, chloroplastic (OEP21) of Pisum sativum (Garden pea).